The chain runs to 364 residues: D-alanine--D-alanine ligase (364 aa).

Positions 134 to 344 (KVLLKSFNIP…YESLVDKLIT (211 aa)) constitute an ATP-grasp domain. Residue 167–222 (NNKLNYPVIVKPSVLGSSIGINVAYNVSQIEKYIEEAFEYDLTVVVEKFIKAREIE) participates in ATP binding. Positions 297, 311, and 313 each coordinate Mg(2+).

It belongs to the D-alanine--D-alanine ligase family. Requires Mg(2+) as cofactor. Mn(2+) serves as cofactor.

It localises to the cytoplasm. The catalysed reaction is 2 D-alanine + ATP = D-alanyl-D-alanine + ADP + phosphate + H(+). Its pathway is cell wall biogenesis; peptidoglycan biosynthesis. Functionally, cell wall formation. The sequence is that of D-alanine--D-alanine ligase from Borrelia recurrentis (strain A1).